Here is a 250-residue protein sequence, read N- to C-terminus: Acetylglutamate kinase (250 aa).

Substrate is bound by residues 41–42 (GG), R63, and N156.

This sequence belongs to the acetylglutamate kinase family. ArgB subfamily.

The protein localises to the cytoplasm. It catalyses the reaction N-acetyl-L-glutamate + ATP = N-acetyl-L-glutamyl 5-phosphate + ADP. It functions in the pathway amino-acid biosynthesis; L-arginine biosynthesis; N(2)-acetyl-L-ornithine from L-glutamate: step 2/4. In terms of biological role, catalyzes the ATP-dependent phosphorylation of N-acetyl-L-glutamate. This chain is Acetylglutamate kinase, found in Listeria welshimeri serovar 6b (strain ATCC 35897 / DSM 20650 / CCUG 15529 / CIP 8149 / NCTC 11857 / SLCC 5334 / V8).